We begin with the raw amino-acid sequence, 449 residues long: Probable phosphoglucosamine mutase (449 aa).

The active-site Phosphoserine intermediate is the serine 96. 4 residues coordinate Mg(2+): serine 96, aspartate 233, aspartate 235, and aspartate 237. Serine 96 is subject to Phosphoserine.

The protein belongs to the phosphohexose mutase family. Requires Mg(2+) as cofactor. Activated by phosphorylation.

The enzyme catalyses alpha-D-glucosamine 1-phosphate = D-glucosamine 6-phosphate. Functionally, catalyzes the conversion of glucosamine-6-phosphate to glucosamine-1-phosphate. The polypeptide is Probable phosphoglucosamine mutase (Thermococcus gammatolerans (strain DSM 15229 / JCM 11827 / EJ3)).